The chain runs to 233 residues: Cytidylate kinase (233 aa).

Gly15–Ser23 provides a ligand contact to ATP. Residues Gln183–Glu200 are compositionally biased toward basic and acidic residues. Residues Gln183–Val203 are disordered.

This sequence belongs to the cytidylate kinase family. Type 1 subfamily.

Its subcellular location is the cytoplasm. The enzyme catalyses CMP + ATP = CDP + ADP. It carries out the reaction dCMP + ATP = dCDP + ADP. The chain is Cytidylate kinase from Geobacter sp. (strain M21).